Reading from the N-terminus, the 378-residue chain is MTETVAIIVAGGRGQRAGAERPKQWQMLLGKRVIDWSIAAFVDHPQISQVVIVAGDELGDCSAEPKIIQAKPGNTRTQSVLSGLAAATISEDATVVIHDAARPGIDAATISSLIARLQDPSVSGAAPAMPVADALKTNSGQSWTNVDRTGLVRVQTPQAFRLGEIRAALSAAGPDLVDDLTAIEAAGGRVEIVSGSARLTKITYPEDFDMLARLLSPTGAPRIGKGYDVHEFEAGDHVTLCGVAIPHIAKLKGHSDADAAWHALTDAILGAVALGDIGDHFPPSDPQWKGADSGLFLKEAQRLAEAKGYVIANCDITVICEAPKVKPHREAMRARTAELLGLPLDAVSVKATTTEGLGFTGRREGIAAEAVALLMPKG.

Residues 1–222 (MTETVAIIVA…RLLSPTGAPR (222 aa)) form a 2-C-methyl-D-erythritol 4-phosphate cytidylyltransferase region. Positions 222–378 (RIGKGYDVHE…EAVALLMPKG (157 aa)) are 2-C-methyl-D-erythritol 2,4-cyclodiphosphate synthase. Residues Asp-228 and His-230 each contribute to the a divalent metal cation site. 4-CDP-2-C-methyl-D-erythritol 2-phosphate-binding positions include 228 to 230 (DVH) and 254 to 255 (HS). His-262 contributes to the a divalent metal cation binding site. 4-CDP-2-C-methyl-D-erythritol 2-phosphate is bound by residues 276–278 (DIG), 352–355 (TTTE), Phe-359, and Arg-362.

In the N-terminal section; belongs to the IspD/TarI cytidylyltransferase family. IspD subfamily. The protein in the C-terminal section; belongs to the IspF family. A divalent metal cation serves as cofactor.

It carries out the reaction 2-C-methyl-D-erythritol 4-phosphate + CTP + H(+) = 4-CDP-2-C-methyl-D-erythritol + diphosphate. The enzyme catalyses 4-CDP-2-C-methyl-D-erythritol 2-phosphate = 2-C-methyl-D-erythritol 2,4-cyclic diphosphate + CMP. The protein operates within isoprenoid biosynthesis; isopentenyl diphosphate biosynthesis via DXP pathway; isopentenyl diphosphate from 1-deoxy-D-xylulose 5-phosphate: step 2/6. It participates in isoprenoid biosynthesis; isopentenyl diphosphate biosynthesis via DXP pathway; isopentenyl diphosphate from 1-deoxy-D-xylulose 5-phosphate: step 4/6. Bifunctional enzyme that catalyzes the formation of 4-diphosphocytidyl-2-C-methyl-D-erythritol from CTP and 2-C-methyl-D-erythritol 4-phosphate (MEP) (IspD), and catalyzes the conversion of 4-diphosphocytidyl-2-C-methyl-D-erythritol 2-phosphate (CDP-ME2P) to 2-C-methyl-D-erythritol 2,4-cyclodiphosphate (ME-CPP) with a corresponding release of cytidine 5-monophosphate (CMP) (IspF). This is Bifunctional enzyme IspD/IspF from Hyphomonas neptunium (strain ATCC 15444).